Consider the following 351-residue polypeptide: MMNLISFETPPLGRRSQDGGSSSSSITAATTTTNKAKEAASHLDLSLGISLSPGGGGGDAGTKASSCCYGGGGDGGGCMGSGMLTAGVLGVGHGGSSHDNTTASSGGGGSWTAAFMPSPTGFMHPWSLAARQQKAAAEQERSGVARLPPATTTYMPRAAATVISLPAAVGWPPVHTSRRNLVATINNVLKPDTTAAVKPDRPTQATAMFAADETTAPPPRSAAAATEASRTLNMFAKVHMDGYKVGRKINLRAHRNYDSLRRVLTKMTHNFFCPADYSSTNKGEEDCAKSDEFIFLYEDFEGDRMLVGDVPWELFLASAKRLYIAKNPAPRNKGTYRPLVWICMLLPKAPY.

Positions 1–37 (MMNLISFETPPLGRRSQDGGSSSSSITAATTTTNKAK) are disordered. Residues 21 to 34 (SSSSSITAATTTTN) are compositionally biased toward low complexity. In terms of domain architecture, PB1 spans 233 to 327 (NMFAKVHMDG…SAKRLYIAKN (95 aa)).

It belongs to the Aux/IAA family. As to quaternary structure, homodimers and heterodimers. As to expression, expressed in roots and seedlings.

The protein resides in the nucleus. Its function is as follows. Aux/IAA proteins are short-lived transcriptional factors that function as repressors of early auxin response genes at low auxin concentrations. This chain is Auxin-responsive protein IAA27 (IAA27), found in Oryza sativa subsp. japonica (Rice).